The chain runs to 379 residues: Putative glutamate--cysteine ligase 2 (379 aa).

It belongs to the glutamate--cysteine ligase type 2 family. YbdK subfamily.

It catalyses the reaction L-cysteine + L-glutamate + ATP = gamma-L-glutamyl-L-cysteine + ADP + phosphate + H(+). Functionally, ATP-dependent carboxylate-amine ligase which exhibits weak glutamate--cysteine ligase activity. This chain is Putative glutamate--cysteine ligase 2, found in Roseiflexus castenholzii (strain DSM 13941 / HLO8).